A 314-amino-acid chain; its full sequence is Porphobilinogen deaminase (314 aa).

An S-(dipyrrolylmethanemethyl)cysteine modification is found at cysteine 243.

This sequence belongs to the HMBS family. As to quaternary structure, monomer. The cofactor is dipyrromethane.

The enzyme catalyses 4 porphobilinogen + H2O = hydroxymethylbilane + 4 NH4(+). It functions in the pathway porphyrin-containing compound metabolism; protoporphyrin-IX biosynthesis; coproporphyrinogen-III from 5-aminolevulinate: step 2/4. Tetrapolymerization of the monopyrrole PBG into the hydroxymethylbilane pre-uroporphyrinogen in several discrete steps. This chain is Porphobilinogen deaminase, found in Bordetella bronchiseptica (strain ATCC BAA-588 / NCTC 13252 / RB50) (Alcaligenes bronchisepticus).